A 112-amino-acid chain; its full sequence is uncharacterized protein (112 aa).

This is an uncharacterized protein from Saccharomyces cerevisiae (strain ATCC 204508 / S288c) (Baker's yeast).